Consider the following 226-residue polypeptide: MGIEEKLPAGVLLTSVEKLVNWSRKSSVWGATFGLACCAIEMMAAGGPHYDMGRWGMEVFRASPRQADLMIVAGRVSQKMAPVLRQIYDQMAEPRWVLSMGVCASSGGMFNNYAIVQGVDHVVPVDMYLPGCPPRPEMLIDAVLKLREKIMHEPLGPNGRKMLEARKARGDVPVVPYGSMPSSYRSDKARRAEWTKAVREGREEQLRIENWMKAQPHLQQYEGLKK.

C37, C38, C103, and C132 together coordinate [4Fe-4S] cluster.

The protein belongs to the complex I 20 kDa subunit family. In terms of assembly, NDH-1 is composed of 14 different subunits. Subunits NuoB, C, D, E, F, and G constitute the peripheral sector of the complex. It depends on [4Fe-4S] cluster as a cofactor.

Its subcellular location is the cell membrane. It carries out the reaction a quinone + NADH + 5 H(+)(in) = a quinol + NAD(+) + 4 H(+)(out). NDH-1 shuttles electrons from NADH, via FMN and iron-sulfur (Fe-S) centers, to quinones in the respiratory chain. The immediate electron acceptor for the enzyme in this species is believed to be a menaquinone. Couples the redox reaction to proton translocation (for every two electrons transferred, four hydrogen ions are translocated across the cytoplasmic membrane), and thus conserves the redox energy in a proton gradient. This chain is NADH-quinone oxidoreductase subunit B 2, found in Salinispora arenicola (strain CNS-205).